A 363-amino-acid chain; its full sequence is Ly6/PLAUR domain-containing protein 3 (363 aa).

The signal sequence occupies residues 1–32 (MDAARRGDTQPVMWTTGWLLLLPLLLCEGAQA). The UPAR/Ly6 1 domain maps to 35–128 (CYSCVQKADD…LNLTLRGLNP (94 aa)). N-linked (GlcNAc...) asparagine glycosylation is found at Asn-120, Asn-131, Asn-178, and Asn-185. Residues 142-224 (CYSCVGLSRE…GSCCQGPRCN (83 aa)) form the UPAR/Ly6 2 domain. Residues 238 to 248 (PPLVLLPPPTT) show a composition bias toward pro residues. 2 disordered regions span residues 238–287 (PPLV…TSPH) and 301–336 (LSGGAAGHGGTAGHGGAAGHQDRSNMEKYPGKGGAQ). Positions 249-278 (AAPSTRAQNSSSTTSTAAPTTTTSIIKPTT) are enriched in low complexity. Residues 304–318 (GAAGHGGTAGHGGAA) are compositionally biased toward gly residues. A compositionally biased stretch (basic and acidic residues) spans 320 to 330 (HQDRSNMEKYP). Ser-343 carries the GPI-anchor amidated serine lipid modification. The propeptide at 344-363 (GTLGSWLSAVLLTVVAGAML) is removed in mature form.

Binds laminin-1 and laminin-5. Interacts with LGALS3. Interacts with AGR2 and AGR3.

It localises to the cell membrane. Supports cell migration. May be involved in tumor progression. This Mus musculus (Mouse) protein is Ly6/PLAUR domain-containing protein 3 (Lypd3).